The following is a 777-amino-acid chain: Acyl-CoA dehydrogenase family member 11 (777 aa).

FAD-binding positions include 501–511 (FCMTEPDVASS), 509–511 (ASS), 535–537 (WSS), and serine 537. Serine 511 is a substrate binding site. 626–629 (GPGR) serves as a coordination point for substrate. FAD contacts are provided by residues arginine 654, glutamine 724, and 724–728 (QVCGG). Glycine 752 is a binding site for substrate. Residues 753–755 (PDE) and glutamate 755 each bind FAD.

The protein belongs to the acyl-CoA dehydrogenase family. Homodimer. FAD serves as cofactor.

The protein localises to the peroxisome. It localises to the mitochondrion membrane. It carries out the reaction a 2,3-saturated acyl-CoA + oxidized [electron-transfer flavoprotein] + H(+) = a (2E)-enoyl-CoA + reduced [electron-transfer flavoprotein]. It catalyses the reaction docosanoyl-CoA + oxidized [electron-transfer flavoprotein] + H(+) = (2E)-docosenoyl-CoA + reduced [electron-transfer flavoprotein]. The catalysed reaction is tetracosanoyl-CoA + oxidized [electron-transfer flavoprotein] + H(+) = (2E)-tetracosenoyl-CoA + reduced [electron-transfer flavoprotein]. The enzyme catalyses eicosanoyl-CoA + oxidized [electron-transfer flavoprotein] + H(+) = (2E)-eicosenoyl-CoA + reduced [electron-transfer flavoprotein]. It carries out the reaction hexacosanoyl-CoA + oxidized [electron-transfer flavoprotein] + H(+) = (2E)-hexacosenoyl-CoA + reduced [electron-transfer flavoprotein]. It catalyses the reaction tricosanoyl-CoA + oxidized [electron-transfer flavoprotein] + H(+) = (2E)-tricosenoyl-CoA + reduced [electron-transfer flavoprotein]. The protein operates within lipid metabolism; fatty acid beta-oxidation. Acyl-CoA dehydrogenase, that exhibits maximal activity towards saturated C22-CoA. Probably participates in beta-oxydation and energy production but could also play a role in the metabolism of specific fatty acids to control fatty acids composition of cellular lipids in brain. This is Acyl-CoA dehydrogenase family member 11 (ACAD11) from Gallus gallus (Chicken).